Reading from the N-terminus, the 337-residue chain is MGKIKIGINGFGRIGRLVARVALQSEDVELVAVNDPFITTDYMTYMFKYDTVHGQWKHSDIALKDSKTLLFGEKPVTVFGIRNPEEIPWGEAGAEYVVESTGVFTDKDKAAAHLKGGAKKVVISAPSKDAPMFVVGVNEDKYTSDVNIVSNASCTTNCLAPLAKVIHDNFGIIEGLMTTVHAITATQKTVDGPSAKDWRGGRAASFNIIPSSTGAAKAVGKVLPELNGKLTGMSFRVPTVDVSVVDLTVRIEKGASYEEIKKAIKAASEGPLKGIMGYVEEDLVSTDFTGDSRSSIFDAKAGIALNDHFIKLVSWYDNEWGYSNRVVDLIRHMFKTQ.

The tract at residues 1-151 (MGKIKIGING…YTSDVNIVSN (151 aa)) is binding to NAD. NAD(+) is bound by residues 13–14 (RI), D35, and R82. A catalytic region spans residues 152-337 (ASCTTNCLAP…DLIRHMFKTQ (186 aa)). Residues 153-155 (SCT), T184, 213-214 (TG), and R236 contribute to the D-glyceraldehyde 3-phosphate site. The active-site Nucleophile is the C154. N318 is an NAD(+) binding site.

Belongs to the glyceraldehyde-3-phosphate dehydrogenase family. As to quaternary structure, homotetramer. In terms of tissue distribution, developing seeds, seedling roots and shoots, and embryo.

The protein resides in the cytoplasm. It carries out the reaction D-glyceraldehyde 3-phosphate + phosphate + NAD(+) = (2R)-3-phospho-glyceroyl phosphate + NADH + H(+). It participates in carbohydrate degradation; glycolysis; pyruvate from D-glyceraldehyde 3-phosphate: step 1/5. Functionally, key enzyme in glycolysis that catalyzes the first step of the pathway by converting D-glyceraldehyde 3-phosphate (G3P) into 3-phospho-D-glyceroyl phosphate. Essential for the maintenance of cellular ATP levels and carbohydrate metabolism. This Zea mays (Maize) protein is Glyceraldehyde-3-phosphate dehydrogenase 2, cytosolic (GAPC2).